We begin with the raw amino-acid sequence, 169 residues long: Lipoprotein signal peptidase (169 aa).

Transmembrane regions (helical) follow at residues 15–35 (WLWL…VVMN), 47–67 (ILPF…SFLS), 75–95 (WLFT…MSKL), and 107–127 (AMII…GFVV). Catalysis depends on residues Asp128 and Asp146. Residues 141-161 (AFNLADMAICLGAAMIILDGF) traverse the membrane as a helical segment.

Belongs to the peptidase A8 family.

The protein localises to the cell inner membrane. The enzyme catalyses Release of signal peptides from bacterial membrane prolipoproteins. Hydrolyzes -Xaa-Yaa-Zaa-|-(S,diacylglyceryl)Cys-, in which Xaa is hydrophobic (preferably Leu), and Yaa (Ala or Ser) and Zaa (Gly or Ala) have small, neutral side chains.. Its pathway is protein modification; lipoprotein biosynthesis (signal peptide cleavage). In terms of biological role, this protein specifically catalyzes the removal of signal peptides from prolipoproteins. The polypeptide is Lipoprotein signal peptidase (Vibrio parahaemolyticus serotype O3:K6 (strain RIMD 2210633)).